Here is a 610-residue protein sequence, read N- to C-terminus: Phragmoplastin DRP1A (610 aa).

Met1 carries the N-acetylmethionine modification. Residues 31 to 300 (WDSLPAIAVV…LERVIKSRIP (270 aa)) form the Dynamin-type G domain. The G1 motif stretch occupies residues 41–48 (GGQSSGKS). 44–49 (SSGKSS) contributes to the GTP binding site. The segment at 67–69 (VTR) is G2 motif. The segment at 142–145 (DLPG) is G3 motif. Positions 211 to 214 (TKID) are G4 motif. GTP-binding positions include 212-217 (KIDLMD) and 242-245 (NRSQ). Residues 241–244 (VNRS) form a G5 motif region. One can recognise a GED domain in the interval 518–610 (LRRIGSNVLS…SEIDAVAWSK (93 aa)).

The protein belongs to the TRAFAC class dynamin-like GTPase superfamily. Dynamin/Fzo/YdjA family. Forms homodimer and may homooligomerize and heterooligomerize to form the phragmoplastin complex. Interacts with AGD3/VAN3. May interact with CALS1. Binds to AHK2. Binds to SH3P2. Forms a complex made of SH3P2 and DRP1A and triggers its accumulation at the cell plate. Interacts with DRP2B at the plasma membrane and in forming clathrin-coated vesicles (CCV). Binds to PHIP1. Ubiquitous. Expressed in leaves (at protein level).

Its subcellular location is the cytoplasm. The protein localises to the cytoskeleton. The protein resides in the phragmoplast. It is found in the cell cortex. It localises to the cytoplasmic vesicle. Its subcellular location is the clathrin-coated vesicle. The protein localises to the cell membrane. The catalysed reaction is GTP + H2O = GDP + phosphate + H(+). Its function is as follows. Microtubule-associated force-producing protein that is targeted to at the leading edges of the forming cell plate during cytokinesis. Also plays a major role in plasma membrane maintenance and cell wall integrity with implications in vesicular trafficking, polar cell expansion, vascular formation, and other aspects of plant growth and development, including stigmatic papillae expansion. Collaboratively with DRP2B, participates in clathrin-coated vesicle formation during endocytosis. Necessary for BOR1 polar localization in low-boron (B) conditions as well as for BOR1 endocytosis and subsequent degradation under high-concentration of boron. Has a GTPase activity. Required for the sterols-dependent dynamic high lipid order observed at the cell plate of dividing cells. Together with SH3P2, converts the fused vesicles to tubular structures at the cell plate and phragmoplasts during cytokinesis. With DRP2B and PIP5K3, required for the precise coordination of polar ARAC3/ROP6 and ARAC4/ROP2 placement and subsequent root hair positioning during planar polarity formation in root hair-forming cells, probably by mediating the correct basal-to-planar polarity switching of D6PK into the polar, lipid-enriched domain. Involved in endocytosis required for cellulose deposition during cell wall formation and elongation. Interacts with plasma membrane-mimetic liposomes and induces their clustering. The protein is Phragmoplastin DRP1A of Arabidopsis thaliana (Mouse-ear cress).